We begin with the raw amino-acid sequence, 431 residues long: Serine--tRNA ligase (431 aa).

235-237 (TAE) serves as a coordination point for L-serine. ATP-binding positions include 266 to 268 (RRE) and valine 282. An L-serine-binding site is contributed by glutamate 289. 353-356 (EASS) contributes to the ATP binding site. Serine 389 serves as a coordination point for L-serine.

This sequence belongs to the class-II aminoacyl-tRNA synthetase family. Type-1 seryl-tRNA synthetase subfamily. As to quaternary structure, homodimer. The tRNA molecule binds across the dimer.

Its subcellular location is the cytoplasm. It carries out the reaction tRNA(Ser) + L-serine + ATP = L-seryl-tRNA(Ser) + AMP + diphosphate + H(+). The enzyme catalyses tRNA(Sec) + L-serine + ATP = L-seryl-tRNA(Sec) + AMP + diphosphate + H(+). It functions in the pathway aminoacyl-tRNA biosynthesis; selenocysteinyl-tRNA(Sec) biosynthesis; L-seryl-tRNA(Sec) from L-serine and tRNA(Sec): step 1/1. Functionally, catalyzes the attachment of serine to tRNA(Ser). Is also able to aminoacylate tRNA(Sec) with serine, to form the misacylated tRNA L-seryl-tRNA(Sec), which will be further converted into selenocysteinyl-tRNA(Sec). This Chlorobium phaeobacteroides (strain DSM 266 / SMG 266 / 2430) protein is Serine--tRNA ligase.